The chain runs to 503 residues: Maturase K (503 aa).

It belongs to the intron maturase 2 family. MatK subfamily.

Its subcellular location is the plastid. The protein localises to the chloroplast. Functionally, usually encoded in the trnK tRNA gene intron. Probably assists in splicing its own and other chloroplast group II introns. The sequence is that of Maturase K from Vicia villosa (Hairy vetch).